Consider the following 558-residue polypeptide: Putative ABC transporter ATP-binding protein SMU_1934c (558 aa).

2 ABC transporter domains span residues 5–246 (IEFK…GIRE) and 295–527 (FDIQ…ANLK). ATP-binding positions include 39-46 (GPSGSGKS) and 328-335 (GKNGAGKS).

Belongs to the ABC transporter superfamily.

It localises to the cell membrane. In terms of biological role, probably part of an ABC transporter complex. Responsible for energy coupling to the transport system. The sequence is that of Putative ABC transporter ATP-binding protein SMU_1934c (sdcBA) from Streptococcus mutans serotype c (strain ATCC 700610 / UA159).